The primary structure comprises 554 residues: Inactive serine/threonine-protein kinase/endoribonuclease IRE1-like (554 aa).

An N-terminal signal peptide occupies residues 1-17; that stretch reads MWLLAISLVGLLVVVVC. The segment at 36 to 85 is disordered; sequence KRDKNSAPRVSASGEDGTKNEQVEKKSDPSGGLGEENEKTNSESKVLSVP. The span at 51–63 shows a compositional bias: basic and acidic residues; sequence DGTKNEQVEKKSD. A Protein kinase domain is found at 121–408; it reads LVSTNEMKYG…ATQVLLHPLF (288 aa). Residue K150 coordinates ATP. The region spanning 411-554 is the KEN domain; the sequence is SEKRLFFLRE…GEEAFEKYFN (144 aa).

Belongs to the protein kinase superfamily. Ser/Thr protein kinase family.

This chain is Inactive serine/threonine-protein kinase/endoribonuclease IRE1-like, found in Arabidopsis thaliana (Mouse-ear cress).